The sequence spans 358 residues: MDLSLAPTTTTSSDQEQDRDQELTSNIGASSSSGPSGNNNNLPMMMIPPPEKEHMFDKVVTPSDVGKLNRLVIPKQHAERYFPLDSSNNQNGTLLNFQDRNGKMWRFRYSYWNSSQSYVMTKGWSRFVKEKKLDAGDIVSFQRGIGDESERSKLYIDWRHRPDMSLVQAHQFGNFGFNFNFPTTSQYSNRFHPLPEYNSVPIHRGLNIGNHQRSYYNTQRQEFVGYGYGNLAGRCYYTGSPLDHRNIVGSEPLVIDSVPVVPGRLTPVMLPPLPPPPSTAGKRLRLFGVNMECGNDYNQQEESWLVPRGEIGASSSSSSALRLNLSTDHDDDNDDGDDGDDDQFAKKGKSSLSLNFNP.

The segment covering 1–14 (MDLSLAPTTTTSSD) has biased composition (polar residues). Residues 1–45 (MDLSLAPTTTTSSDQEQDRDQELTSNIGASSSSGPSGNNNNLPMM) are disordered. Residues 25–45 (SNIGASSSSGPSGNNNNLPMM) are compositionally biased toward low complexity. The TF-B3 DNA-binding region spans 56-162 (FDKVVTPSDV…KLYIDWRHRP (107 aa)). Positions 310 to 358 (EIGASSSSSSALRLNLSTDHDDDNDDGDDGDDDQFAKKGKSSLSLNFNP) are disordered. The segment covering 329–342 (HDDDNDDGDDGDDD) has biased composition (acidic residues).

Its subcellular location is the nucleus. Regulates lateral organ growth. Functionally redundant with NGA1, NGA2 and NGA4. The protein is B3 domain-containing transcription factor NGA3 (NGA3) of Arabidopsis thaliana (Mouse-ear cress).